Reading from the N-terminus, the 166-residue chain is uncharacterized protein (166 aa).

Composition is skewed to basic and acidic residues over residues 1–13 (MAEVSKKRCEHNS), 21–112 (KAND…KTKE), and 119–137 (DNVENKDKNEVYENIKEGG). The disordered stretch occupies residues 1–144 (MAEVSKKRCE…EGGSKAWNKT (144 aa)). Repeat copies occupy residues 31–41 (DKTKETAGSAK), 42–52 (DKTKETAGSAK), 53–63 (DKTKETAESAK), 64–74 (DKTKETAGSAK), 75–85 (DKTKETAESAK), 86–96 (DKTKETAGSAK), 97–107 (DKTKETAESAK), and 108–118 (DKTKETAGNVR). The segment at 31 to 118 (DKTKETAGSA…KTKETAGNVR (88 aa)) is 8 X 11 AA approximate tandem repeats of D-K-T-K-E-T-A-G/E-S-A-K.

Belongs to the LEA type 1 family.

This is an uncharacterized protein from Encephalitozoon cuniculi (strain GB-M1) (Microsporidian parasite).